We begin with the raw amino-acid sequence, 394 residues long: Bifunctional enzyme Fae/Hps (394 aa).

The tract at residues 1–162 (MEFRIGEALI…YEKDRSFHPF (162 aa)) is formaldehyde-activating enzyme. Histidine 18 acts as the Proton donor in catalysis. Substrate is bound by residues aspartate 20, leucine 49, lysine 67, threonine 69, and glutamine 84. Positions 163 to 394 (VGRKLTKLWD…TDQFRIMTDF (232 aa)) are 3-hexulose-6-phosphate synthase.

In the N-terminal section; belongs to the formaldehyde-activating enzyme family. This sequence in the C-terminal section; belongs to the HPS/KGPDC family. HPS subfamily.

The catalysed reaction is 5,6,7,8-tetrahydromethanopterin + formaldehyde = 5,10-methylenetetrahydromethanopterin + H2O. It catalyses the reaction D-ribulose 5-phosphate + formaldehyde = D-arabino-hex-3-ulose 6-phosphate. The protein operates within carbohydrate biosynthesis; D-ribose 5-phosphate biosynthesis. Functionally, catalyzes the condensation of formaldehyde with tetrahydromethanopterin (H(4)MPT) to 5,10-methylenetetrahydromethanopterin. In terms of biological role, catalyzes the reversible formation of ribulose-5-phosphate and formaldehyde from 3-hexulose-6-phosphate. The polypeptide is Bifunctional enzyme Fae/Hps (Archaeoglobus fulgidus (strain ATCC 49558 / DSM 4304 / JCM 9628 / NBRC 100126 / VC-16)).